A 550-amino-acid chain; its full sequence is M-phase inducer phosphatase 1-B (550 aa).

2 disordered regions span residues 76-98 (NLGDETAPLPTESPDRISSGKVE) and 285-335 (SPSM…QRRG). The segment covering 290 to 310 (EKLDRPMLKRPVRPLDSETPV) has biased composition (basic and acidic residues). Residues 322-335 (LQPQEENFQPQRRG) show a composition bias toward polar residues. Positions 401–508 (LVEKIFIIDC…FFPEYKELCE (108 aa)) constitute a Rhodanese domain. Cysteine 457 is an active-site residue.

It belongs to the MPI phosphatase family.

The catalysed reaction is O-phospho-L-tyrosyl-[protein] + H2O = L-tyrosyl-[protein] + phosphate. In terms of biological role, tyrosine protein phosphatase which functions as a dosage-dependent inducer of mitotic progression. Directly dephosphorylates CDK1 and stimulates its kinase activity. The chain is M-phase inducer phosphatase 1-B (cdc25-1-b) from Xenopus laevis (African clawed frog).